Here is a 147-residue protein sequence, read N- to C-terminus: Globin (147 aa).

The 146-residue stretch at 2–147 folds into the Globin domain; the sequence is SFSAAQVDTV…SVANGIGQYQ (146 aa). 2 residues coordinate heme b: His64 and His95.

This sequence belongs to the globin family. In terms of assembly, homodimer or homooligomer.

This is Globin from Aequiyoldia eightsii (Antarctic yoldia).